A 796-amino-acid chain; its full sequence is MLQYLKKIKGVSFMKTIKLPVVVTRGIFILPSTSKTIEFGRVKSKNALDASADLYNNQIVVVSQESPLEEEPNLEHLFYLGTVADLSVKKVWKDGTISVELNYNQKIKIDEFVEEDNIIYAIGSVFEDKLPKTDAQKTKIKEALEELQEKHSFNTSELLLVFNENDFNKLNSLIYQIIDKMPLVSLNTKLLLIQSTSILEKLELLKELIINRPKSTIKLNNNLNNNSTVDSEINKKLKDKMDKQQKEYYLREKMRIIKEELDDENSDASQLDKYKKRLEEEPFPESVKEKILSSIKRIETMQPGSAEVNVERNYVDWMMSIPWWEQSEDIDDLKYAQEILEKHHFGLKKVKERIIEYLAVKQKTKSLKGPIITFVGPPGVGKTSLARSIAEALGKKFVKVSLGGVKDESEIRGHRKTYVGSMPGRIIQALKRAKVKNPLFLLDEIDKMASDNRGDPASAMLEVLDPEQNKEFSDHYIEEPYDLSTVMFIATANYIENIPEALYDRMEIINLSSYTEIEKMHIAKDYLTKKILEEDQLTEDELRFTDEAYDEIIKYYTREAGVRQLERHLATIARKFIVKLLNGEITNLVVTREVVVQYLGKHIFEHTSKEEESQVGVVTGLAYTQFGGDILPIEVSTYNGKGNLTLTGKLGEVMKESATIALTYVKANHEKFGISKDKFDDIDIHIHVPEGAVPKDGPSAGITLTTALISALSKQPVSKDFGMTGEITLRGNVLPIGGLREKSISAARSGLKHILIPSKNVKDIEDVPQEVQDVLKITPVSKYEDVYEIIFKNNNQ.

Positions L19–P213 constitute a Lon N-terminal domain. ATP is bound at residue G376 to T383. The Lon proteolytic domain maps to E612–N793. Residues S699 and K742 contribute to the active site.

Belongs to the peptidase S16 family. Homohexamer. Organized in a ring with a central cavity.

It localises to the cytoplasm. The catalysed reaction is Hydrolysis of proteins in presence of ATP.. Functionally, ATP-dependent serine protease that mediates the selective degradation of mutant and abnormal proteins as well as certain short-lived regulatory proteins. Required for cellular homeostasis and for survival from DNA damage and developmental changes induced by stress. Degrades polypeptides processively to yield small peptide fragments that are 5 to 10 amino acids long. Binds to DNA in a double-stranded, site-specific manner. The polypeptide is Lon protease (Mycoplasma mycoides subsp. mycoides SC (strain CCUG 32753 / NCTC 10114 / PG1)).